Reading from the N-terminus, the 134-residue chain is UPF0412 protein YaaI (134 aa).

The first 23 residues, 1 to 23 (MKSVITISASLAISLMLCCTAQA), serve as a signal peptide directing secretion.

Belongs to the UPF0412 family.

This chain is UPF0412 protein YaaI, found in Escherichia coli (strain UTI89 / UPEC).